Consider the following 828-residue polypeptide: Kinesin-associated protein 3 (828 aa).

3 ARM repeats span residues 332 to 372 (YVEN…NLSF), 373 to 411 (DTDLRGKMIKLGMLPKFVELLANDNHRLVVLCVLYHVSQ), and 577 to 611 (DDSCAAMLAKSGIIQSLIELLNAKQEDDEIVCQIV).

Heterotrimer of a 115 kDa subunit (KAP115) and two kinesin-like subunits of 95 kDa (KRP95) and 85 kDa (KRP85).

Its function is as follows. Binds to the tail domain of the KRP85/KRP95 heterodimer to form a heterotrimeric kinesin-II complex and may regulate the spindle vesicle targeting of this complex. In Strongylocentrotus purpuratus (Purple sea urchin), this protein is Kinesin-associated protein 3 (KAP115).